A 660-amino-acid polypeptide reads, in one-letter code: Arginine--tRNA ligase, cytoplasmic (660 aa).

Met-1 is subject to N-acetylmethionine. The tract at residues 1–72 is could be involved in the assembly of the multisynthetase complex; that stretch reads MDVLVSECSA…QAERNKPTKN (72 aa). L-arginine contacts are provided by residues 200-202, His-211, Tyr-384, Asp-388, and Gln-412; that span reads SPN. The 'HIGH' region signature appears at 201 to 212; sequence PNIAKEMHVGHL. The interval 529 to 543 is interaction with tRNA; that stretch reads NTAAYLLYAFTRIRS.

Belongs to the class-I aminoacyl-tRNA synthetase family. Interacts (via N-terminus) with AIMP1 (via N-terminus); this stimulates its catalytic activity. Interacts (via N-terminus) with LARS2 (via C-terminus). Monomer. Part of a multisubunit complex that groups tRNA ligases for Arg (RARS1), Asp (DARS1), Gln (QARS1), Ile (IARS1), Leu (LARS1), Lys (KARS1), Met (MARS1) the bifunctional ligase for Glu and Pro (EPRS1) and the auxiliary subunits AIMP1/p43, AIMP2/p38 and EEF1E1/p18. Interacts with QARS1. Part of a complex composed of RARS1, QARS1 and AIMP1.

The protein resides in the cytoplasm. Its subcellular location is the cytosol. It catalyses the reaction tRNA(Arg) + L-arginine + ATP = L-arginyl-tRNA(Arg) + AMP + diphosphate. Its function is as follows. Forms part of a macromolecular complex that catalyzes the attachment of specific amino acids to cognate tRNAs during protein synthesis. Modulates the secretion of AIMP1 and may be involved in generation of the inflammatory cytokine EMAP2 from AIMP1. The sequence is that of Arginine--tRNA ligase, cytoplasmic from Homo sapiens (Human).